The following is a 457-amino-acid chain: Endo-1,3(4)-beta-glucanase ARB_04519 (457 aa).

An N-terminal signal peptide occupies residues 1 to 18; it reads MRTTGLLLLGALAELGSA. In terms of domain architecture, GH16 spans 19–319; sequence TYILEDDYQP…YMKVYQQGTA (301 aa). Glu-130 (nucleophile) is an active-site residue. Glu-135 acts as the Proton donor in catalysis. N-linked (GlcNAc...) asparagine glycosylation occurs at Asn-200. Positions 318 to 397 are disordered; that stretch reads TAPTKPSQAP…DSCPPPTQPA (80 aa). The segment covering 333–352 has biased composition (low complexity); the sequence is TPALPTMKSTSTVSSMVSAT. A compositionally biased stretch (polar residues) spans 353-362; that stretch reads QPAPTASNPT. Low complexity predominate over residues 368-378; the sequence is PSSSSSNNGPQ.

This sequence belongs to the glycosyl hydrolase 16 family.

Its subcellular location is the secreted. It carries out the reaction Endohydrolysis of (1-&gt;3)- or (1-&gt;4)-linkages in beta-D-glucans when the glucose residue whose reducing group is involved in the linkage to be hydrolyzed is itself substituted at C-3.. Its function is as follows. Mixed-linked glucanase involved in the degradation of complex natural cellulosic substrates. Active on laminarin. lichenan, soluble carboxymethyl cellulose but not on pustulan. The protein is Endo-1,3(4)-beta-glucanase ARB_04519 of Arthroderma benhamiae (strain ATCC MYA-4681 / CBS 112371) (Trichophyton mentagrophytes).